Here is a 379-residue protein sequence, read N- to C-terminus: Mating-type protein MAT-1 (379 aa).

The segment at residues Arg-60–Arg-117 is a DNA-binding region (alpha box).

The protein belongs to the MATALPHA1 family.

The protein resides in the nucleus. Functionally, mating type proteins are sequence specific DNA-binding proteins that act as master switches in fungal differentiation by controlling gene expression in a cell type-specific fashion. Transcriptional activator that induces the transcription of alpha-specific genes. This is Mating-type protein MAT-1 (MAT1) from Curvularia kusanoi (Cochliobolus kusanoi).